A 241-amino-acid chain; its full sequence is Probable transcriptional regulatory protein NE0210 (241 aa).

The protein belongs to the TACO1 family.

The protein localises to the cytoplasm. In Nitrosomonas europaea (strain ATCC 19718 / CIP 103999 / KCTC 2705 / NBRC 14298), this protein is Probable transcriptional regulatory protein NE0210.